The following is a 537-amino-acid chain: Bifunctional purine biosynthesis protein PurH (537 aa).

Residues 8-158 (IPAPDLVPVR…KNHAYVAVVT (151 aa)) form the MGS-like domain.

It belongs to the PurH family.

The catalysed reaction is (6R)-10-formyltetrahydrofolate + 5-amino-1-(5-phospho-beta-D-ribosyl)imidazole-4-carboxamide = 5-formamido-1-(5-phospho-D-ribosyl)imidazole-4-carboxamide + (6S)-5,6,7,8-tetrahydrofolate. The enzyme catalyses IMP + H2O = 5-formamido-1-(5-phospho-D-ribosyl)imidazole-4-carboxamide. The protein operates within purine metabolism; IMP biosynthesis via de novo pathway; 5-formamido-1-(5-phospho-D-ribosyl)imidazole-4-carboxamide from 5-amino-1-(5-phospho-D-ribosyl)imidazole-4-carboxamide (10-formyl THF route): step 1/1. It functions in the pathway purine metabolism; IMP biosynthesis via de novo pathway; IMP from 5-formamido-1-(5-phospho-D-ribosyl)imidazole-4-carboxamide: step 1/1. The chain is Bifunctional purine biosynthesis protein PurH from Chelativorans sp. (strain BNC1).